Consider the following 792-residue polypeptide: Phosphoenolpyruvate synthase (792 aa).

His-421 serves as the catalytic Tele-phosphohistidine intermediate. The substrate site is built by Arg-511, Arg-578, Glu-680, Gly-701, Ser-702, Asn-703, and Asp-704. Glu-680 contacts Mg(2+). Mg(2+) is bound at residue Asp-704. Cys-751 (proton donor) is an active-site residue.

It belongs to the PEP-utilizing enzyme family. Homodimer. Requires Mg(2+) as cofactor.

It carries out the reaction pyruvate + ATP + H2O = phosphoenolpyruvate + AMP + phosphate + 2 H(+). The protein operates within carbohydrate biosynthesis; gluconeogenesis. With respect to regulation, activated by a Pi-dependent pyrophosphorylation and inactivated by an ADP-dependent phosphorylation on a regulatory threonine. Both reactions are mediated by the bifunctional serine/threonine kinase and phosphorylase PpsR. Its function is as follows. Catalyzes the phosphorylation of pyruvate to phosphoenolpyruvate. The chain is Phosphoenolpyruvate synthase (ppsA) from Escherichia coli (strain K12).